Reading from the N-terminus, the 237-residue chain is Listeriolysin regulatory protein (237 aa).

One can recognise an HTH crp-type domain in the interval 137–212 (NGKLGSICGQ…NSCFYVQNLD (76 aa)).

In terms of biological role, positively regulates expression of listeriolysin, of 1-phosphadidylinositol phosphodiesterase (PI-PLC) and other virulence factors. The sequence is that of Listeriolysin regulatory protein (prfA) from Listeria monocytogenes serovar 1/2a (strain ATCC BAA-679 / EGD-e).